A 636-amino-acid chain; its full sequence is 3-phosphoinositide-dependent protein kinase 1 (636 aa).

2 stretches are compositionally biased toward low complexity: residues 1–20 and 27–37; these read MEDL…NNDT and APTTLNLTPTA. A disordered region spans residues 1 to 45; sequence MEDLTPTNTSLDTTTTNNDTTSDREAAPTTLNLTPTASESENSLS. The region spanning 69–364 is the Protein kinase domain; sequence FMFLQSMGEG…SQELMAHKFF (296 aa). ATP is bound by residues 79-81 and lysine 98; that span reads AYS. The interval 100 to 149 is PIF-pocket; sequence LQKSYLNRHQKMDAIIREKNILTYLSQECGGHPFVTQLYTHFHDQARIYF. ATP-binding positions include 152 to 154 and aspartate 158; that span reads GLV. The active-site Proton acceptor is aspartate 197. Residues aspartate 201 and aspartate 215 each coordinate ATP. Disordered stretches follow at residues 233-264 and 593-636; these read TDAN…EENT and KKSR…KKSP. A coiled-coil region spans residues 550 to 631; the sequence is DLEKKADEWC…QVSKKLSMQM (82 aa). Basic and acidic residues predominate over residues 597 to 624; it reads KEMMREQKALRRKQEKEEKKALKAEQVS.

This sequence belongs to the protein kinase superfamily. AGC Ser/Thr protein kinase family. PDPK1 subfamily. Interacts directly with sgk-1, akt-1 and akt-2.

The protein resides in the cytoplasm. The catalysed reaction is L-seryl-[protein] + ATP = O-phospho-L-seryl-[protein] + ADP + H(+). It catalyses the reaction L-threonyl-[protein] + ATP = O-phospho-L-threonyl-[protein] + ADP + H(+). In terms of biological role, involved in the daf-2/insulin receptor-like transduction pathway, which controls longevity and prevents developmental arrest at the dauer stage. Phosphorylates and activates sgk-1, akt-1 and akt-2. The sequence is that of 3-phosphoinositide-dependent protein kinase 1 from Caenorhabditis elegans.